A 184-amino-acid polypeptide reads, in one-letter code: Cobalamin adenosyltransferase (184 aa).

The interval 1–21 (MGNRLSKIATRTGDAGTTGLG) is disordered. Residues 10–13 (TRTG), 18–19 (TG), lysine 28, 130–134 (RRAER), and asparagine 154 each bind ATP.

This sequence belongs to the Cob(I)alamin adenosyltransferase family. As to quaternary structure, homotrimer.

The enzyme catalyses 2 cob(II)alamin + AH2 + 2 ATP = 2 adenosylcob(III)alamin + 2 triphosphate + A + 2 H(+). Its activity is regulated as follows. Is potentially allosterically regulated by GTP/GDP, which enhances its affinity for AdoCbl by 5-fold. Binds cob(II)alamin weakly in the absence of ATP. The presence of ATP (but not GTP or GDP) increases the affinity of cob(II)alamin for the enzyme, and stoichiometric binding is observed. GTP blocks the transfer of cob(II)alamin to IcmF from ATR, thus averting its reconstitution with inactive cofactor. Functionally, adenosyltransferase that catalyzes the conversion of cob(II)alamin to adenosylcob(III)alamin (AdoCbl) in the presence of ATP and an electron donor. Acts as an accessory protein of IcmF that functions in cofactor repair, since IcmF is prone to inactivation during catalytic turnover due to the occasional loss of the 5'-deoxyadenosine moiety and formation of the inactive cob(II)alamin cofactor in its active site. Thus, receives and repairs the inactive cofactor, which is then reloaded onto IcmF in a GTPase-gated step. This is Cobalamin adenosyltransferase from Cupriavidus metallidurans (strain ATCC 43123 / DSM 2839 / NBRC 102507 / CH34) (Ralstonia metallidurans).